The chain runs to 56 residues: Conotoxin Bu12 (56 aa).

The N-terminal stretch at 1–2 (TA) is a signal peptide. Positions 3–25 (EDSRGTQLHRALRKATKLPVSTR) are excised as a propeptide. Intrachain disulfides connect cysteine 26-cysteine 40, cysteine 33-cysteine 44, and cysteine 39-cysteine 49.

It belongs to the conotoxin O1 superfamily. As to expression, expressed by the venom duct.

The protein resides in the secreted. In Conus bullatus (Bubble cone), this protein is Conotoxin Bu12.